We begin with the raw amino-acid sequence, 131 residues long: Leptin receptor overlapping transcript-like 1 (131 aa).

The next 4 membrane-spanning stretches (helical) occupy residues L7–L27, Q32–A52, L69–A89, and A100–F120.

Belongs to the OB-RGRP/VPS55 family. As to quaternary structure, interacts with RAB13.

Its subcellular location is the membrane. Negatively regulates growth hormone (GH) receptor cell surface expression in liver. May play a role in liver resistance to GH during periods of reduced nutrient availability. The protein is Leptin receptor overlapping transcript-like 1 (Leprotl1) of Mus musculus (Mouse).